The primary structure comprises 900 residues: DNA mismatch repair protein MutS (900 aa).

Gly-637–Ser-644 contributes to the ATP binding site.

Belongs to the DNA mismatch repair MutS family.

This protein is involved in the repair of mismatches in DNA. It is possible that it carries out the mismatch recognition step. This protein has a weak ATPase activity. The protein is DNA mismatch repair protein MutS of Methanosarcina mazei (strain ATCC BAA-159 / DSM 3647 / Goe1 / Go1 / JCM 11833 / OCM 88) (Methanosarcina frisia).